Reading from the N-terminus, the 188-residue chain is Elongation factor P (188 aa).

Belongs to the elongation factor P family.

The protein resides in the cytoplasm. It functions in the pathway protein biosynthesis; polypeptide chain elongation. Involved in peptide bond synthesis. Stimulates efficient translation and peptide-bond synthesis on native or reconstituted 70S ribosomes in vitro. Probably functions indirectly by altering the affinity of the ribosome for aminoacyl-tRNA, thus increasing their reactivity as acceptors for peptidyl transferase. The sequence is that of Elongation factor P from Cereibacter sphaeroides (strain KD131 / KCTC 12085) (Rhodobacter sphaeroides).